The chain runs to 100 residues: Ribosomal processing cysteine protease Prp (100 aa).

The active-site Proton donor is the histidine 16. The Nucleophile role is filled by cysteine 28.

The protein belongs to the Prp family. In terms of assembly, homodimer.

Functionally, an essential cysteine protease that cleaves the N-terminus from ribosomal protein bL27. In Mycoplasma pneumoniae (strain ATCC 29342 / M129 / Subtype 1) (Mycoplasmoides pneumoniae), this protein is Ribosomal processing cysteine protease Prp.